Here is a 182-residue protein sequence, read N- to C-terminus: NADH-quinone oxidoreductase subunit I (182 aa).

2 consecutive 4Fe-4S ferredoxin-type domains span residues 52–82 and 92–121; these read LTRD…LQKA and DFFR…LTPD. Positions 62, 65, 68, 72, 101, 104, 107, and 111 each coordinate [4Fe-4S] cluster.

Belongs to the complex I 23 kDa subunit family. As to quaternary structure, NDH-1 is composed of 13 different subunits. Subunits NuoA, H, J, K, L, M, N constitute the membrane sector of the complex. [4Fe-4S] cluster serves as cofactor.

It is found in the cell inner membrane. It carries out the reaction a quinone + NADH + 5 H(+)(in) = a quinol + NAD(+) + 4 H(+)(out). NDH-1 shuttles electrons from NADH, via FMN and iron-sulfur (Fe-S) centers, to quinones in the respiratory chain. The immediate electron acceptor for the enzyme in this species is believed to be ubiquinone. Couples the redox reaction to proton translocation (for every two electrons transferred, four hydrogen ions are translocated across the cytoplasmic membrane), and thus conserves the redox energy in a proton gradient. The sequence is that of NADH-quinone oxidoreductase subunit I from Pseudomonas fluorescens (strain Pf0-1).